A 399-amino-acid polypeptide reads, in one-letter code: UDP-galactopyranose mutase (399 aa).

FAD-binding positions include serine 25, 44 to 45 (EK), asparagine 52, and 71 to 72 (HI). Residues serine 171, tryptophan 175, tyrosine 200, asparagine 297, arginine 306, and tyrosine 345 each contribute to the UDP-alpha-D-galactose site. FAD is bound at residue arginine 374. UDP-alpha-D-galactose is bound at residue tyrosine 380. 381-386 (IDMDRA) contacts FAD.

Belongs to the UDP-galactopyranose/dTDP-fucopyranose mutase family. It depends on FAD as a cofactor.

The enzyme catalyses UDP-alpha-D-galactose = UDP-alpha-D-galactofuranose. Its function is as follows. Involved in the conversion of UDP-GalP into UDP-GalF through a 2-keto intermediate. This chain is UDP-galactopyranose mutase (glf), found in Mycoplasma pneumoniae (strain ATCC 29342 / M129 / Subtype 1) (Mycoplasmoides pneumoniae).